The sequence spans 178 residues: Cell wall-binding protein YwsB (178 aa).

The signal sequence occupies residues methionine 1 to alanine 30. SH3b domains lie at isoleucine 47–alanine 111 and threonine 116–lysine 178.

The protein localises to the secreted. It localises to the cell wall. Its activity is regulated as follows. Increases in stationary phase in a strain lacking the WprA protease. This is Cell wall-binding protein YwsB (ywsB) from Bacillus subtilis (strain 168).